The chain runs to 168 residues: Endoribonuclease YbeY (168 aa).

Zn(2+)-binding residues include H119, H123, and H129.

This sequence belongs to the endoribonuclease YbeY family. Zn(2+) serves as cofactor.

The protein resides in the cytoplasm. Its function is as follows. Single strand-specific metallo-endoribonuclease involved in late-stage 70S ribosome quality control and in maturation of the 3' terminus of the 16S rRNA. The sequence is that of Endoribonuclease YbeY from Gluconobacter oxydans (strain 621H) (Gluconobacter suboxydans).